We begin with the raw amino-acid sequence, 335 residues long: Fructose-1,6-bisphosphatase class 1 (335 aa).

4 residues coordinate Mg(2+): Glu-92, Asp-114, Leu-116, and Asp-117. Substrate contacts are provided by residues 117 to 120 (DGSS) and Asn-209. Glu-281 serves as a coordination point for Mg(2+).

It belongs to the FBPase class 1 family. In terms of assembly, homotetramer. Requires Mg(2+) as cofactor.

The protein resides in the cytoplasm. The catalysed reaction is beta-D-fructose 1,6-bisphosphate + H2O = beta-D-fructose 6-phosphate + phosphate. It participates in carbohydrate biosynthesis; gluconeogenesis. This Nitrosococcus oceani (strain ATCC 19707 / BCRC 17464 / JCM 30415 / NCIMB 11848 / C-107) protein is Fructose-1,6-bisphosphatase class 1.